The following is an 81-amino-acid chain: Toxin TdNa10 (81 aa).

The N-terminal stretch at 1-20 is a signal peptide; that stretch reads MWTFAIVLAFLLIGLDEGEA. One can recognise an LCN-type CS-alpha/beta domain in the interval 21-81; sequence LDGYPLSKNN…KMYPGELPCH (61 aa). 4 cysteine pairs are disulfide-bonded: Cys-32-Cys-80, Cys-36-Cys-57, Cys-42-Cys-62, and Cys-46-Cys-64.

Belongs to the long (4 C-C) scorpion toxin superfamily. Sodium channel inhibitor family. Beta subfamily. In terms of tissue distribution, expressed by the venom gland.

Its subcellular location is the secreted. Alpha toxins bind voltage-independently at site-3 of sodium channels (Nav) and inhibit the inactivation of the activated channels, thereby blocking neuronal transmission. This toxin binds, in vitro, to sodium channels and inhibits the inactivation of the activated channels. Seems not toxic to mice, crickets and sweet-water shrimps. The protein is Toxin TdNa10 of Tityus discrepans (Venezuelan scorpion).